The sequence spans 429 residues: MVRSDENSLGLIGSMSLQGGGVVGKIKTTATTGPTRRALSTINKNITEAPSYPYAVNKRSVSERDGICNKPPVHRPVTRKFAAQLADHKPHIRDEETKKPDSVSSEEPETIIIDVDESDKEGGDSNEPMFVQHTEAMLEEIEQMEKEIEMEDADKEEEPVIDIDACDKNNPLAAVEYIHDMHTFYKNFEKLSCVPPNYMDNQQDLNERMRGILIDWLIEVHYKFELMEETLYLTINVIDRFLAVHQIVRKKLQLVGVTALLLACKYEEVSVPVVDDLILISDKAYSRREVLDMEKLMANTLQFNFSLPTPYVFMKRFLKAAQSDKKLEILSFFMIELCLVEYEMLEYLPSKLAASAIYTAQCTLKGFEEWSKTCEFHTGYNEKQLLACARKMVAFHHKAGTGKLTGVHRKYNTSKFCHAARTEPAGFLI.

The segment covering 86 to 101 has biased composition (basic and acidic residues); the sequence is ADHKPHIRDEETKKPD. Positions 86-109 are disordered; the sequence is ADHKPHIRDEETKKPDSVSSEEPE.

This sequence belongs to the cyclin family. Cyclin AB subfamily.

The polypeptide is Cyclin-B2-3 (CYCB2-3) (Arabidopsis thaliana (Mouse-ear cress)).